Here is a 311-residue protein sequence, read N- to C-terminus: Aspartate carbamoyltransferase catalytic subunit (311 aa).

Arg58 and Thr59 together coordinate carbamoyl phosphate. Lys86 is an L-aspartate binding site. Residues Arg108, His136, and Gln139 each contribute to the carbamoyl phosphate site. Positions 169 and 224 each coordinate L-aspartate. Residues Gly265 and Pro266 each coordinate carbamoyl phosphate.

The protein belongs to the aspartate/ornithine carbamoyltransferase superfamily. ATCase family. In terms of assembly, heterododecamer (2C3:3R2) of six catalytic PyrB chains organized as two trimers (C3), and six regulatory PyrI chains organized as three dimers (R2).

It carries out the reaction carbamoyl phosphate + L-aspartate = N-carbamoyl-L-aspartate + phosphate + H(+). Its pathway is pyrimidine metabolism; UMP biosynthesis via de novo pathway; (S)-dihydroorotate from bicarbonate: step 2/3. In terms of biological role, catalyzes the condensation of carbamoyl phosphate and aspartate to form carbamoyl aspartate and inorganic phosphate, the committed step in the de novo pyrimidine nucleotide biosynthesis pathway. In Geobacter sulfurreducens (strain ATCC 51573 / DSM 12127 / PCA), this protein is Aspartate carbamoyltransferase catalytic subunit.